Consider the following 226-residue polypeptide: MGLWLSLCGAVVVVAYLLGSFPTGYIAVKQLKGIDIREVGSGSTGATNVLRTLGKGPGAFVLGLDCLKGVLAIALVDYLFNFATSQNLIPTTVNVQLWQPWLVTLAGIAAILGHSKSIFLGFTGGKSVATSLGILLAMNWQVGLATFGVFAVVVAISRIVSLSSIMGAIAVSIVMVVLQQPLPYILFGIAGGLYVILRHRSNIERLLAGTEPKIGQKLTTETEQSA.

6 helical membrane-spanning segments follow: residues methionine 1–phenylalanine 21, glycine 56–valine 76, leucine 102–phenylalanine 122, isoleucine 134–valine 154, isoleucine 159–leucine 178, and leucine 182–leucine 197.

It belongs to the PlsY family. In terms of assembly, probably interacts with PlsX.

The protein localises to the cell inner membrane. The enzyme catalyses an acyl phosphate + sn-glycerol 3-phosphate = a 1-acyl-sn-glycero-3-phosphate + phosphate. It functions in the pathway lipid metabolism; phospholipid metabolism. Catalyzes the transfer of an acyl group from acyl-phosphate (acyl-PO(4)) to glycerol-3-phosphate (G3P) to form lysophosphatidic acid (LPA). This enzyme utilizes acyl-phosphate as fatty acyl donor, but not acyl-CoA or acyl-ACP. The chain is Glycerol-3-phosphate acyltransferase from Trichormus variabilis (strain ATCC 29413 / PCC 7937) (Anabaena variabilis).